The following is a 43-amino-acid chain: U5-hexatoxin-Mr1a (43 aa).

Cystine bridges form between cysteine 1–cysteine 16, cysteine 8–cysteine 21, cysteine 15–cysteine 36, and cysteine 17–cysteine 43.

It belongs to the neurotoxin 35 family. Post-translationally, contains 4 disulfide bonds. In terms of tissue distribution, expressed by the venom gland.

It localises to the secreted. Functionally, this toxin blocks the neuromuscular transmission, and also acts on muscle. It exerts an effect of first exciting and then inhibiting the contraction of muscle. This toxin is active only against mammals. The polypeptide is U5-hexatoxin-Mr1a (Macrothele raveni (Funnel-web spider)).